Reading from the N-terminus, the 471-residue chain is BRISC complex subunit FAM175B (471 aa).

The MPN domain maps to 7-161 (LVTISGAALS…THKFRHVFLR (155 aa)). Residues 245-272 (ESDLEVAELEKQVHELKIKIATQQLAKR) are a coiled coil. Residues 343–445 (AEKSRRAGRS…FSDAECPISS (103 aa)) form a disordered region. The span at 359–370 (NQQQETQNFFTN) shows a compositional bias: low complexity.

This sequence belongs to the FAM175 family. Abro1 subfamily. As to quaternary structure, component of the BRISC complex, at least composed of FAM175B/ABRO1, BRCC3/BRCC36, BABAM2 and BABAM1/NBA1. Within the complex, interacts directly with BRCC3/BRCC36. The heterodimer with BRCC3/BRCC36 assembles into a heterotetramer. The BRISC complex binds polyubiquitin.

The protein resides in the cytoplasm. Its subcellular location is the nucleus. It localises to the cytoskeleton. The protein localises to the spindle pole. Component of the BRISC complex that specifically cleaves 'Lys-63'-linked polyubiquitin, leaving the last ubiquitin chain attached to its substrates. Does not have activity by itself, but the catalytic subunit BRCC3/BRCC36 needs to be associated into a heterotetramer with FAM175B for minimal in vitro activity. May act as a central scaffold protein that assembles the various components of the BRISC complex and retains them in the cytoplasm. Plays a role in regulating the onset of apoptosis via its role in modulating 'Lys-63'-linked ubiquitination of target proteins. Required for normal mitotic spindle assembly and microtubule attachment to kinetochores via its role in deubiquitinating numa1. This chain is BRISC complex subunit FAM175B, found in Camponotus floridanus (Florida carpenter ant).